A 280-amino-acid chain; its full sequence is Energy-coupling factor transporter ATP-binding protein EcfA1 (280 aa).

The ABC transporter domain maps to isoleucine 7–aspartate 241. Glycine 41–serine 48 lines the ATP pocket.

It belongs to the ABC transporter superfamily. Energy-coupling factor EcfA family. In terms of assembly, forms a stable energy-coupling factor (ECF) transporter complex composed of 2 membrane-embedded substrate-binding proteins (S component), 2 ATP-binding proteins (A component) and 2 transmembrane proteins (T component).

The protein localises to the cell membrane. Its function is as follows. ATP-binding (A) component of a common energy-coupling factor (ECF) ABC-transporter complex. Unlike classic ABC transporters this ECF transporter provides the energy necessary to transport a number of different substrates. The polypeptide is Energy-coupling factor transporter ATP-binding protein EcfA1 (Latilactobacillus sakei subsp. sakei (strain 23K) (Lactobacillus sakei subsp. sakei)).